Reading from the N-terminus, the 1171-residue chain is Phytochrome B (1171 aa).

A compositionally biased stretch (low complexity) spans 1–19 (MASGSRATPTRSPSSARPA). Residues 1 to 53 (MASGSRATPTRSPSSARPAAPRHQHHHSQSSGGSTSRAGGGGGGGGGGGGGAA) form a disordered region. Residues 38-52 (AGGGGGGGGGGGGGA) are compositionally biased toward gly residues. Residues 259–442 (DVKLLCDTVV…AFGLQLNMEL (184 aa)) form the GAF domain. C364 contacts phytochromobilin. 2 PAS domains span residues 661 to 732 (VARE…LRGD) and 795 to 866 (DYKA…MIVL). Residues 943–1161 (YIYQEIKNPL…FFHIVLELPQ (219 aa)) form the Histidine kinase domain.

The protein belongs to the phytochrome family. As to quaternary structure, homodimer. Post-translationally, contains one covalently linked phytochromobilin chromophore.

Regulatory photoreceptor which exists in two forms that are reversibly interconvertible by light: the Pr form that absorbs maximally in the red region of the spectrum and the Pfr form that absorbs maximally in the far-red region. Photoconversion of Pr to Pfr induces an array of morphogenic responses, whereas reconversion of Pfr to Pr cancels the induction of those responses. Pfr controls the expression of a number of nuclear genes including those encoding the small subunit of ribulose-bisphosphate carboxylase, chlorophyll A/B binding protein, protochlorophyllide reductase, rRNA, etc. It also controls the expression of its own gene(s) in a negative feedback fashion. This is Phytochrome B (PHYB) from Oryza sativa subsp. japonica (Rice).